A 547-amino-acid chain; its full sequence is Isoflavonoid 7-O-beta-apiosyl-glucoside beta-glycosidase (547 aa).

Positions M1–R31 are cleaved as a signal peptide. Residue Q59 coordinates a beta-D-glucoside. 2 N-linked (GlcNAc...) asparagine glycosylation sites follow: N72 and N132. Residue H159 participates in a beta-D-glucoside binding. N-linked (GlcNAc...) asparagine glycosylation occurs at N175. N204–E205 lines the a beta-D-glucoside pocket. E205 (proton donor) is an active-site residue. The cysteines at positions 224 and 232 are disulfide-linked. An N-linked (GlcNAc...) asparagine glycan is attached at N285. Residues Y348, E419, W468, E475 to W476, and F484 each bind a beta-D-glucoside. E419 acts as the Nucleophile in catalysis. N490 is a glycosylation site (N-linked (GlcNAc...) asparagine).

This sequence belongs to the glycosyl hydrolase 1 family. As to quaternary structure, homotetramer.

It carries out the reaction 7-[beta-D-apiofuranosyl-(1-&gt;6)-beta-D-glucopyranosyloxy]isoflavonoid + H2O = a 7-hydroxyisoflavonoid + beta-D-apiofuranosyl-(1-&gt;6)-D-glucose.. With respect to regulation, not inhibited by iron, calcium, mercury, manganese, zinc or EDTA. Functionally, hydrolyzes dalpatein 7-O-beta-D-apiofuranosyl-(1-&gt;6)-beta-D-glucopyranoside and dalnigrein 7-O-beta-D-apiofuranosyl-(1-&gt;6)-beta-D-glucopyranoside. Also has activity towards pNP-beta-D-fucoside and pNP-beta-D-glucoside, but not pNP-beta-cellobioside. In Dalbergia nigrescens (Thai blackwood), this protein is Isoflavonoid 7-O-beta-apiosyl-glucoside beta-glycosidase.